The chain runs to 344 residues: GTP 3',8-cyclase (344 aa).

The 227-residue stretch at 19–245 (PFGRAVTYLR…DIPYRTGGPA (227 aa)) folds into the Radical SAM core domain. Arg28 is a binding site for GTP. [4Fe-4S] cluster is bound by residues Cys35 and Cys39. S-adenosyl-L-methionine is bound at residue Tyr41. Residue Cys42 coordinates [4Fe-4S] cluster. Arg77 lines the GTP pocket. Gly81 contributes to the S-adenosyl-L-methionine binding site. Thr111 contributes to the GTP binding site. Position 135 (Ser135) interacts with S-adenosyl-L-methionine. Lys171 provides a ligand contact to GTP. S-adenosyl-L-methionine is bound at residue Met205. [4Fe-4S] cluster contacts are provided by Cys268 and Cys271. 273–275 (RVR) lines the GTP pocket. Cys285 serves as a coordination point for [4Fe-4S] cluster.

The protein belongs to the radical SAM superfamily. MoaA family. In terms of assembly, monomer and homodimer. Requires [4Fe-4S] cluster as cofactor.

The enzyme catalyses GTP + AH2 + S-adenosyl-L-methionine = (8S)-3',8-cyclo-7,8-dihydroguanosine 5'-triphosphate + 5'-deoxyadenosine + L-methionine + A + H(+). It functions in the pathway cofactor biosynthesis; molybdopterin biosynthesis. Functionally, catalyzes the cyclization of GTP to (8S)-3',8-cyclo-7,8-dihydroguanosine 5'-triphosphate. In Brucella ovis (strain ATCC 25840 / 63/290 / NCTC 10512), this protein is GTP 3',8-cyclase.